The following is a 246-amino-acid chain: 3-deoxy-manno-octulosonate cytidylyltransferase (246 aa).

It belongs to the KdsB family.

The protein localises to the cytoplasm. The catalysed reaction is 3-deoxy-alpha-D-manno-oct-2-ulosonate + CTP = CMP-3-deoxy-beta-D-manno-octulosonate + diphosphate. It functions in the pathway nucleotide-sugar biosynthesis; CMP-3-deoxy-D-manno-octulosonate biosynthesis; CMP-3-deoxy-D-manno-octulosonate from 3-deoxy-D-manno-octulosonate and CTP: step 1/1. Its pathway is bacterial outer membrane biogenesis; lipopolysaccharide biosynthesis. In terms of biological role, activates KDO (a required 8-carbon sugar) for incorporation into bacterial lipopolysaccharide in Gram-negative bacteria. In Bradyrhizobium sp. (strain ORS 278), this protein is 3-deoxy-manno-octulosonate cytidylyltransferase.